Consider the following 1219-residue polypeptide: Myosin-5 (1219 aa).

The span at 1-12 (MAILKRGARKKV) shows a compositional bias: basic residues. Residues 1 to 20 (MAILKRGARKKVHQEPAKRS) form a disordered region. Positions 36-715 (VGVSDLTLLS…TLFALEHMRD (680 aa)) constitute a Myosin motor domain. An ATP-binding site is contributed by 129-136 (GESGAGKT). A Phosphoserine modification is found at serine 357. Phosphotyrosine is present on tyrosine 359. An actin-binding region spans residues 404 to 486 (SIGILDIYGF…PGIFAAMNDS (83 aa)). IQ domains are found at residues 719-739 (HNMA…RIDA) and 740-765 (ATKI…YGTK). The 191-residue stretch at 771–961 (KERRSMSLLG…TISVRRGNPP (191 aa)) folds into the TH1 domain. Serine 777 bears the Phosphoserine mark. Polar residues predominate over residues 951–964 (STISVRRGNPPNSQ). 2 disordered regions span residues 951-1106 (STIS…SELP) and 1139-1167 (TAYM…VLNS). The segment covering 974–984 (SISSGYHASSS) has biased composition (low complexity). At serine 992 the chain carries Phosphoserine. A compositionally biased stretch (polar residues) spans 1030–1041 (NPASTLTASQSN). A compositionally biased stretch (low complexity) spans 1048–1063 (TAATRATPAATPAAAA). Residues 1072 to 1083 (IPPPPPPPPPSS) are compositionally biased toward pro residues. The region spanning 1085–1147 (PKEPMFEAAY…PTAYMKPHSG (63 aa)) is the SH3 domain. Phosphoserine is present on serine 1205.

The protein belongs to the TRAFAC class myosin-kinesin ATPase superfamily. Myosin family. As to quaternary structure, interacts (via myosin motor domain) with SHE4; this interaction is important for proper localization and may regulate the interaction of the motor domain with actin. Interacts (via SH3 domain) with VRP1; this interaction is required for localization to sites of polarized growth and may regulate the interaction of the tail domain with actin. Interacts (via SH3 domain) with PAN1; this interaction is important for late stages of endocytopsis. Interacts (via SH3 domain) with BBC1 and LAS17. Interacts (via C-terminal acidic tail) with ARC19 and ARC40; ARC19 and ARC40 are Arp2/3 complex subunits. Interacts with BZZ1, PKH1, PKH2, YPK1 and YPK2. Post-translationally, phosphorylation of the TEDS site (Ser-357) is required for the polarization of the actin cytoskeleton and for ligand-induced, but not for constitutive internalization of STE2. Phosphorylation probably activates the myosin-I ATPase activity. Ser-357 is phosphorylated by YPK2 in vitro.

Its subcellular location is the cytoplasm. The protein resides in the cytoskeleton. The protein localises to the actin patch. Its function is as follows. One of two redundant type-I myosins implicated in the organization of the actin cytoskeleton. Required for proper actin cytoskeleton polarization and for the internalization step in endocytosis. At the cell cortex, assembles in patch-like structures together with proteins from the actin-polymerizing machinery and promotes actin assembly. Functions redundantly with LAS17 as actin nucleation-promoting factor (NPF) for the Arp2/3 complex. Motor domain phosphorylation by PAK kinases CLA4 and STE20 promotes CDC42-regulated actin assembly. Functions together with the NPF PAN1 in late stages of endocytosis. Motor domain phosphorylation by PDK1 kinases PKH1 and PKH2, and by SGK kinases YPK1 and YPK2, promotes ligand-induced, but not constitutive endocytosis of the G protein-coupled receptor STE2. In Saccharomyces cerevisiae (strain YJM789) (Baker's yeast), this protein is Myosin-5 (MYO5).